A 4660-amino-acid polypeptide reads, in one-letter code: Low-density lipoprotein receptor-related protein 2 (4660 aa).

The first 25 residues, 1–25 (MERGAAAAAWMLLLAIAACLAPVSG), serve as a signal peptide directing secretion. At 26-4425 (QECGSGNFRC…LSRGIPPGTT (4400 aa)) the chain is on the extracellular side. 7 consecutive LDL-receptor class A domains span residues 27–63 (ECGSGNFRCDNGYCIPASWRCDGTRDCLDDTDEIGCP), 66–104 (SCGSGFFLCPAEGTCIPSSWVCDQDKDCSDGADEQQNCP), 107–143 (TCSSQQLTCSNGQCVPIEYRCDHVSDCPDGSDERNCY), 146–180 (TCDQLTCANGACYNTSQKCDHKVDCRDSSDEANCT), 182–218 (LCSQKEFQCGSGECILRAYVCDHDNDCEDNSDEHNCN), 221–257 (TCGGHQFTCSNGQCINQNWVCDGDDDCQDSGDEDGCE), and 264–307 (TCYP…RYCG). Disulfide bonds link cysteine 28-cysteine 40, cysteine 35-cysteine 53, cysteine 47-cysteine 62, cysteine 67-cysteine 80, cysteine 74-cysteine 93, cysteine 87-cysteine 103, cysteine 108-cysteine 120, cysteine 115-cysteine 133, cysteine 127-cysteine 142, cysteine 147-cysteine 157, cysteine 152-cysteine 170, cysteine 164-cysteine 179, cysteine 183-cysteine 195, cysteine 190-cysteine 208, cysteine 202-cysteine 217, cysteine 222-cysteine 234, cysteine 229-cysteine 247, cysteine 241-cysteine 256, cysteine 265-cysteine 278, cysteine 272-cysteine 291, and cysteine 285-cysteine 306. N-linked (GlcNAc...) asparagine glycans are attached at residues asparagine 159 and asparagine 178. Asparagine 299, asparagine 340, asparagine 387, and asparagine 462 each carry an N-linked (GlcNAc...) asparagine glycan. 4 LDL-receptor class B repeats span residues 435 to 477 (HRVF…DWIN), 478 to 520 (NKLY…DPTV), 521 to 567 (GYLF…DLVS), and 568 to 612 (KRVY…FEEH). An N-linked (GlcNAc...) asparagine glycan is attached at asparagine 657. LDL-receptor class B repeat units lie at residues 752-794 (STIF…DWIS), 795-836 (RNLY…HPAA), 837-880 (GYMF…DWST), and 881-924 (SRLY…FKDN). The N-linked (GlcNAc...) asparagine glycan is linked to asparagine 865. The LDL-receptor class A 8 domain occupies 1024-1060 (QCGSSSFPCNNGKCVPSIFRCDGVDDCHDNSDEHQCG). Disulfide bonds link cysteine 1025/cysteine 1037, cysteine 1032/cysteine 1050, and cysteine 1044/cysteine 1059. N-linked (GlcNAc...) asparagine glycosylation occurs at asparagine 1063. 7 consecutive LDL-receptor class A domains span residues 1065–1102 (TCSSSAFTCVHGGQCIPGQWRCDKQNDCLDGSDEQNCP), 1109–1145 (TCPPTSFTCDNHMCIPKEWVCDTDNDCSDGSDEKNCQ), 1149–1185 (TCHPTQFRCPDHRCISPLYVCDGDKDCVDGSDEAGCV), 1187–1224 (NCTSSQFKCADGSSCINSRYRCDGVYDCKDNSDEAGCP), 1230–1268 (MCHPDEFQCQGDGTCIPNTWECDGHPDCIQGSDEHNGCV), 1271–1307 (TCSPSHFLCDNGNCIYNSWVCDGDNDCRDMSDEKDCP), and 1312–1350 (HCPSSQWQCPGYSICVNLSALCDGVFDCPNGTDESPLCN). Cystine bridges form between cysteine 1066–cysteine 1079, cysteine 1073–cysteine 1092, cysteine 1086–cysteine 1101, cysteine 1110–cysteine 1122, cysteine 1117–cysteine 1135, cysteine 1129–cysteine 1144, cysteine 1150–cysteine 1162, cysteine 1157–cysteine 1175, and cysteine 1169–cysteine 1184. Residues tryptophan 1127, aspartate 1130, aspartate 1132, aspartate 1134, aspartate 1140, and glutamate 1141 each coordinate Ca(2+). N-linked (GlcNAc...) asparagine glycosylation occurs at asparagine 1187. 18 disulfides stabilise this stretch: cysteine 1188/cysteine 1201, cysteine 1195/cysteine 1214, cysteine 1208/cysteine 1223, cysteine 1231/cysteine 1244, cysteine 1238/cysteine 1257, cysteine 1251/cysteine 1267, cysteine 1272/cysteine 1284, cysteine 1279/cysteine 1297, cysteine 1291/cysteine 1306, cysteine 1313/cysteine 1326, cysteine 1320/cysteine 1339, cysteine 1333/cysteine 1349, cysteine 1354/cysteine 1365, cysteine 1361/cysteine 1374, cysteine 1376/cysteine 1389, cysteine 1395/cysteine 1405, cysteine 1401/cysteine 1414, and cysteine 1416/cysteine 1429. Ca(2+) is bound by residues tyrosine 1206, aspartate 1209, valine 1211, aspartate 1213, aspartate 1219, and glutamate 1220. N-linked (GlcNAc...) asparagine glycosylation is found at asparagine 1328 and asparagine 1341. The 41-residue stretch at 1350 to 1390 (NQDSCLHFNGGCTHRCIQGPFGATCVCPIGYQLANDTKTCE) folds into the EGF-like 1 domain. N-linked (GlcNAc...) asparagine glycosylation is present at asparagine 1384. In terms of domain architecture, EGF-like 2; calcium-binding spans 1391-1430 (DVNECDIPGFCSQHCVNMRGSFRCACDPEYTLESDGRTCK). N-linked (GlcNAc...) asparagine glycosylation is found at asparagine 1451, asparagine 1497, and asparagine 1551. LDL-receptor class B repeat units follow at residues 1479 to 1521 (GRVF…DWIG), 1522 to 1564 (RNIY…DPRM), 1567 to 1610 (NVMF…DYPN), 1611 to 1655 (RLIY…FEDS), and 1656 to 1696 (VFWT…IHPS). 3 N-linked (GlcNAc...) asparagine glycosylation sites follow: asparagine 1676, asparagine 1733, and asparagine 1811. 10 LDL-receptor class B repeats span residues 1791-1833 (QFIY…DWVS), 1834-1883 (RNIY…DPAR), 1884-1931 (GKLY…DIQE), 1932-1973 (QKLY…HGSF), 1974-2014 (LYYS…YHHR), 2108-2157 (GFIY…DWVA), 2158-2202 (GNLY…DPKH), 2203-2246 (RYLF…DHDT), 2247-2290 (GYIY…FGES), and 2291-2333 (IIWV…FDEH). Residues asparagine 2131, asparagine 2134, asparagine 2178, and asparagine 2225 are each glycosylated (N-linked (GlcNAc...) asparagine). N-linked (GlcNAc...) asparagine glycosylation is present at asparagine 2396. LDL-receptor class B repeat units follow at residues 2432–2478 (NRIF…DWIN), 2479–2519 (RRIY…DPCR), 2520–2563 (GYMY…DLET), 2564–2605 (DLLY…YGQY), and 2606–2647 (IYWT…VVKT). N-linked (GlcNAc...) asparagine glycosylation is found at asparagine 2488 and asparagine 2548. LDL-receptor class A domains lie at 2700 to 2738 (RCNQFQFTCLNGRCISQDWKCDNDNDCGDGSDELPTVCA), 2741 to 2777 (TCRSTAFTCANGRCVPYHYRCDFYNDCGDNSDEAGCL), 2780 to 2819 (SCNSTTEFTCSNGRCIPLSYVCNGINNCHDNDTSDEKNCP), 2822 to 2861 (TCQPDFAKCQTTNICVPRAFLCDGDNDCGDGSDENPIYCA), 2864 to 2902 (TCRSNEFQCVSPHRCIPSYWFCDGEADCVDSSDEPDTCG), 2907 to 2946 (SCSANQFHCDNGRCISSSWVCDGDNDCGDMSDEDQRHHCE), 2949 to 2991 (NCSS…QNCT), 2994 to 3030 (ACSTGEFSCANGRCIRQSFRCDRRNDCGDYSDERGCS), 3033 to 3071 (PCRDDQFTCQNGQCITKLYVCDEDNDCGDGSDEQEHLCH), and 3076 to 3112 (TCPPHQFRCDNGHCIEMGTVCNHVDDCSDNSDEKGCG). 18 disulfides stabilise this stretch: cysteine 2701–cysteine 2713, cysteine 2708–cysteine 2726, cysteine 2720–cysteine 2737, cysteine 2742–cysteine 2754, cysteine 2749–cysteine 2767, cysteine 2761–cysteine 2776, cysteine 2781–cysteine 2794, cysteine 2789–cysteine 2807, cysteine 2801–cysteine 2818, cysteine 2823–cysteine 2836, cysteine 2830–cysteine 2849, cysteine 2843–cysteine 2860, cysteine 2865–cysteine 2878, cysteine 2872–cysteine 2891, cysteine 2885–cysteine 2901, cysteine 2908–cysteine 2920, cysteine 2915–cysteine 2933, and cysteine 2927–cysteine 2945. A glycan (N-linked (GlcNAc...) asparagine) is linked at asparagine 2782. Asparagine 2810 is a glycosylation site (N-linked (GlcNAc...) asparagine). N-linked (GlcNAc...) asparagine glycosylation occurs at asparagine 2949. 18 disulfides stabilise this stretch: cysteine 2950-cysteine 2967, cysteine 2957-cysteine 2980, cysteine 2974-cysteine 2990, cysteine 2995-cysteine 3007, cysteine 3002-cysteine 3020, cysteine 3014-cysteine 3029, cysteine 3034-cysteine 3046, cysteine 3041-cysteine 3059, cysteine 3053-cysteine 3070, cysteine 3077-cysteine 3089, cysteine 3084-cysteine 3102, cysteine 3096-cysteine 3111, cysteine 3116-cysteine 3128, cysteine 3124-cysteine 3137, cysteine 3139-cysteine 3152, cysteine 3158-cysteine 3169, cysteine 3165-cysteine 3178, and cysteine 3180-cysteine 3193. Asparagine 2989 is a glycosylation site (N-linked (GlcNAc...) asparagine). The 42-residue stretch at 3112–3153 (GINECQDSSISHCDHNCTDTITSFYCSCLPGYKLMSDKRTCV) folds into the EGF-like 3 domain. Asparagine 3127 is a glycosylation site (N-linked (GlcNAc...) asparagine). Positions 3154–3194 (DIDECKETPQLCSQKCENVIGSYICKCAPGYIREPDGKSCR) constitute an EGF-like 4; calcium-binding domain. Residues asparagine 3213, asparagine 3259, asparagine 3317, and asparagine 3357 are each glycosylated (N-linked (GlcNAc...) asparagine). 5 LDL-receptor class B repeats span residues 3241 to 3283 (ERLY…DWVS), 3284 to 3326 (RKLY…ENPR), 3335 to 3378 (GYVY…DYTN), 3379 to 3421 (DLLY…FEDT), and 3422 to 3462 (VFWT…LHPY). Asparagine 3448 carries N-linked (GlcNAc...) asparagine glycosylation. LDL-receptor class A domains lie at 3513–3551 (MCSSTQFLCGNNEKCIPIWWKCDGQKDCSDGSDESDLCP), 3554–3592 (FCRLGQFQCRDGNCTSPQALCNARQDCADGSDEDRVLCE), 3595–3633 (RCEANEWQCANKRCIPEYWQCDSVDDCLDNSDEDPSHCA), 3636–3674 (TCRPGQFKCNNGRCIPQSWKCDVDNDCGDYSDEPIHECM), 3679–3717 (NCDNHTEFSCKTNYRCIPQWAVCNGFDDCRDNSDEQGCE), 3720–3757 (PCHPSGDFRCGNHHCIPLRWKCDGIDDCGDNSDEESCV), 3760–3796 (ECTESEFRCADQQCIPSRWVCDQENDCGDNSDERDCE), and 3799–3835 (TCHPEHFQCTSGHCVPKALACDGRADCLDASDESACP). Disulfide bonds link cysteine 3514–cysteine 3527, cysteine 3521–cysteine 3540, cysteine 3534–cysteine 3550, cysteine 3555–cysteine 3567, cysteine 3562–cysteine 3580, cysteine 3574–cysteine 3591, cysteine 3596–cysteine 3608, cysteine 3603–cysteine 3621, cysteine 3615–cysteine 3632, cysteine 3637–cysteine 3649, cysteine 3644–cysteine 3662, cysteine 3656–cysteine 3673, cysteine 3680–cysteine 3694, cysteine 3688–cysteine 3707, cysteine 3701–cysteine 3716, cysteine 3721–cysteine 3734, cysteine 3729–cysteine 3747, cysteine 3741–cysteine 3756, cysteine 3761–cysteine 3773, cysteine 3768–cysteine 3786, cysteine 3780–cysteine 3795, cysteine 3800–cysteine 3812, cysteine 3807–cysteine 3825, and cysteine 3819–cysteine 3834. N-linked (GlcNAc...) asparagine glycosylation is present at asparagine 3566. Asparagine 3682 carries an N-linked (GlcNAc...) asparagine glycan. An N-linked (GlcNAc...) asparagine glycan is attached at asparagine 3840. LDL-receptor class A domains lie at 3843–3881 (YCPAAMFECKNHVCIQSFWICDGENDCVDGSDEEIHLCF), 3884–3923 (PCESPQRFRCDNSRCIYGHQLCNGVDDCGDGSDEKEEHCR), and 3929–3965 (PCTDTEYKCSNGNCVSQHYVCDNVDDCGDLSDETGCN). Intrachain disulfides connect cysteine 3844-cysteine 3856, cysteine 3851-cysteine 3869, cysteine 3863-cysteine 3880, cysteine 3885-cysteine 3898, cysteine 3893-cysteine 3911, cysteine 3905-cysteine 3922, cysteine 3930-cysteine 3942, cysteine 3937-cysteine 3955, and cysteine 3949-cysteine 3964. N-linked (GlcNAc...) asparagine glycosylation is found at asparagine 3969 and asparagine 3980. The 42-residue stretch at 4009 to 4050 (DINECEEFGICPQSCRNSKGSYECFCVDGFKSMSTHYGERCA) folds into the EGF-like 5; calcium-binding domain. Intrachain disulfides connect cysteine 4013–cysteine 4023, cysteine 4019–cysteine 4032, and cysteine 4034–cysteine 4049. Asparagine 4070 carries an N-linked (GlcNAc...) asparagine glycan. LDL-receptor class B repeat units follow at residues 4156-4198 (RHIY…NPKL), 4199-4242 (GLMF…DYLN), and 4244-4285 (DRIY…FEDQ). N-linked (GlcNAc...) asparagine glycosylation occurs at asparagine 4329. The 35-residue stretch at 4379 to 4413 (MPSPCRCMHGGSCYFDENDLPKCKCSSGYSGEYCE) folds into the EGF-like 6 domain. Intrachain disulfides connect cysteine 4383–cysteine 4391, cysteine 4385–cysteine 4401, and cysteine 4403–cysteine 4412. A helical transmembrane segment spans residues 4426–4446 (MALLLTFAMVIIVGALVLVGF). Residues 4447–4660 (FHYRKTGSLL…ANLVKEDSDV (214 aa)) are Cytoplasmic-facing. The SH3-binding signature appears at 4454 to 4463 (SLLPSLPKLP). The PxLPxI/L motif 1; mediates interaction with ANKRA2 motif lies at 4457-4462 (PSLPKL). The PxLPxI/L motif 2; mediates interaction with ANKRA2 motif lies at 4460-4465 (PKLPSL). Residues serine 4464 and serine 4467 each carry the phosphoserine modification. Positions 4522–4527 (FENPMY) match the Endocytosis signal motif. Positions 4558–4660 (QNYGRSIDPS…ANLVKEDSDV (103 aa)) are disordered. At serine 4577 the chain carries Phosphoserine. Residues 4597–4610 (QTTNFENPIYAEMD) are interaction with DAB2. The short motif at 4603-4606 (NPIY) is the NPXY motif element. The SH2-binding signature appears at 4606–4609 (YAEM). Positions 4619 to 4630 (VAPPPSPSLPAK) match the SH3-binding motif. Serine 4624 is subject to Phosphoserine. The segment covering 4627 to 4636 (LPAKASKRSS) has biased composition (low complexity). Phosphothreonine is present on threonine 4637. The residue at position 4658 (serine 4658) is a Phosphoserine.

This sequence belongs to the LDLR family. In terms of assembly, binds plasminogen, extracellular matrix components, plasminogen activator-plasminogen activator inhibitor type I complex, apolipoprotein E-enriched beta-VLDL, lipoprotein lipase, lactoferrin, CLU/clusterin and calcium. Forms a multimeric complex together with LRPAP1. Interacts (via PxLPxI/L motif) with ANKRA2 (via ankyrin repeats). Interacts with LRP2BP. Interacts (via NPXY motif) with DAB2; the interaction is not affected by tyrosine phosphorylation of the NPXY motif. Interacts with MB. Interacts with BMP4. Interacts with the Sonic hedgehog protein N-product which is the active product of SHH. Interacts with CST3 in a calcium-dependent manner. Interacts with the vitamin-D binding protein GC/DBP. Interacts with sex hormone-binding protein SHBG. Interacts with angiotensin-2. Also interacts with angiotensin 1-7. Interacts with APOM. Interacts with selenoprotein SEPP1. Interacts with LEP. Interacts with ALB. Interacts with the antiapoptotic protein BIRC5/survivin. Interacts with matrix metalloproteinase MMP2 in complex with metalloproteinase inhibitor TIMP1. In neurons, forms a trimeric complex with APP and APPB1/FE65. Interacts with LDLRAP1/ARH; mediates trafficking of LRP2 to the endocytic recycling compartment. Does not interact with beta-amyloid protein 40 alone but interacts with the complex composed of beta-amyloid protein 40 and CLU/APOJ. Interacts with MDK. In terms of processing, a fraction undergoes proteolytic cleavage of the extracellular domain at the cell membrane to generate a cytoplasmic tail fragment. This is internalized into the early endosome from where it trafficks in an LDLRAP1/ARH-dependent manner to the endocytic recycling compartment (ERC). In the ERC, it is further cleaved by gamma-secretase to release a fragment which translocates to the nucleus and mediates transcriptional repression. Post-translationally, N-glycosylation is required for ligand binding. Contains core-fucosylated N-glycans in kidney proximal convoluted tubules (PCTs) and hybrid-type N-glycans in proximal straight tubules (PSTs). Interacts with ligands in a glycoform-dependent manner. Retinol-binding protein and the vitamin D carrier GC/DBP are endocytosed primarily by PCTs, albumin is endocytosed equally by PCTs and PSTs, and the aminoglycoside kanamycin is endocytosed primarily by PSTs. In terms of tissue distribution, in the inner ear, strongly expressed in the marginal cells of the stria vascularis (at protein level). In the female reproductive tract, expressed on the luminal side of the uterine epithelium (at protein level). In the adult brain, expressed in ependymal cells of the lateral ventricles where expression is restricted to the ependyma that faces the stem cell niche (at protein level). Expressed in neurons throughout the brain including in the hippocampus, limbic cortices and cerebellum (at protein level). In the developing optic nerve, expressed exclusively in astrocytes at 14.5 dpc, 16.5 dpc and 18.5 dpc (at protein level).

The protein localises to the apical cell membrane. The protein resides in the endosome lumen. It is found in the membrane. Its subcellular location is the coated pit. It localises to the cell projection. The protein localises to the dendrite. The protein resides in the axon. Functionally, multiligand endocytic receptor. Acts together with CUBN to mediate endocytosis of high-density lipoproteins. Mediates receptor-mediated uptake of polybasic drugs such as aprotinin, aminoglycosides and polymyxin B. In the kidney, mediates the tubular uptake and clearance of leptin. Also mediates transport of leptin across the blood-brain barrier through endocytosis at the choroid plexus epithelium. Endocytosis of leptin in neuronal cells is required for hypothalamic leptin signaling and leptin-mediated regulation of feeding and body weight. Mediates endocytosis and subsequent lysosomal degradation of CST3 in kidney proximal tubule cells. Mediates renal uptake of 25-hydroxyvitamin D3 in complex with the vitamin D3 transporter GC/DBP. Mediates renal uptake of metallothionein-bound heavy metals. Together with CUBN, mediates renal reabsorption of myoglobin. Mediates renal uptake and subsequent lysosomal degradation of APOM. Plays a role in kidney selenium homeostasis by mediating renal endocytosis of selenoprotein SEPP1. Mediates renal uptake of the antiapoptotic protein BIRC5/survivin which may be important for functional integrity of the kidney. Mediates renal uptake of matrix metalloproteinase MMP2 in complex with metalloproteinase inhibitor TIMP1. Mediates endocytosis of Sonic hedgehog protein N-product (ShhN), the active product of SHH. Also mediates ShhN transcytosis. In the embryonic neuroepithelium, mediates endocytic uptake and degradation of BMP4, is required for correct SHH localization in the ventral neural tube and plays a role in patterning of the ventral telencephalon. Required at the onset of neurulation to sequester SHH on the apical surface of neuroepithelial cells of the rostral diencephalon ventral midline and to control PTCH1-dependent uptake and intracellular trafficking of SHH. During neurulation, required in neuroepithelial cells for uptake of folate bound to the folate receptor FOLR1 which is necessary for neural tube closure. In the adult brain, negatively regulates BMP signaling in the subependymal zone which enables neurogenesis to proceed. In astrocytes, mediates endocytosis of ALB which is required for the synthesis of the neurotrophic factor oleic acid. Involved in neurite branching. During optic nerve development, required for SHH-mediated migration and proliferation of oligodendrocyte precursor cells. Mediates endocytic uptake and clearance of SHH in the retinal margin which protects retinal progenitor cells from mitogenic stimuli and keeps them quiescent. Plays a role in reproductive organ development by mediating uptake in reproductive tissues of androgen and estrogen bound to the sex hormone binding protein SHBG. Mediates endocytosis of angiotensin-2. Also mediates endocytosis of angiotensin 1-7. Binds to the complex composed of beta-amyloid protein 40 and CLU/APOJ and mediates its endocytosis and lysosomal degradation. Required for embryonic heart development. Required for normal hearing, possibly through interaction with estrogen in the inner ear. This Mus musculus (Mouse) protein is Low-density lipoprotein receptor-related protein 2 (Lrp2).